We begin with the raw amino-acid sequence, 397 residues long: MTKTIAINAGSSSLKWQLYEMPEEVVLAKGLIERIGLRDSVSTVKFADRSESQTLDIADHVQAVKILLDDLIRFDIIKSYDEITGVGHRVVAGGEYFKESSLVDEYALAKIEELSASAPLHNPGAASGIRAFKELLPDITSVAVFDTAFHTSMPEVAYRYPVPNRYYTDYQVRKYGAHGTSHQYVSQEAAKLLGKPIEETKIITAHVGNGVSITAVDGGKSVDTSMGLTPLGGVMMGTRTGDLDPAIIPFIIDREPDMADAERIRHVFNKESGLLGISEKSSDMRDIIAGKEAGDEKCTLAYDLYVDRLRKYIAQYFGVMNGADAIVFTAGIGENSADVRASVLDGLTWFGIEVDPEKNVFGRVGDITTADSAVKVFVIPTDEELVIARDVERLKTK.

Asn8 serves as a coordination point for Mg(2+). Lys15 lines the ATP pocket. Arg89 is a substrate binding site. Catalysis depends on Asp146, which acts as the Proton donor/acceptor. ATP-binding positions include His206–Gly210, Asp283–Arg285, and Gly331–Asn335. Glu383 lines the Mg(2+) pocket.

It belongs to the acetokinase family. Homodimer. Mg(2+) is required as a cofactor. It depends on Mn(2+) as a cofactor.

Its subcellular location is the cytoplasm. It carries out the reaction acetate + ATP = acetyl phosphate + ADP. It functions in the pathway metabolic intermediate biosynthesis; acetyl-CoA biosynthesis; acetyl-CoA from acetate: step 1/2. Catalyzes the formation of acetyl phosphate from acetate and ATP. Can also catalyze the reverse reaction. The sequence is that of Acetate kinase from Streptococcus thermophilus (strain ATCC BAA-491 / LMD-9).